The following is a 172-amino-acid chain: Peptide methionine sulfoxide reductase MsrA (172 aa).

Cys-14 is a catalytic residue.

Belongs to the MsrA Met sulfoxide reductase family.

The enzyme catalyses L-methionyl-[protein] + [thioredoxin]-disulfide + H2O = L-methionyl-(S)-S-oxide-[protein] + [thioredoxin]-dithiol. The catalysed reaction is [thioredoxin]-disulfide + L-methionine + H2O = L-methionine (S)-S-oxide + [thioredoxin]-dithiol. Functionally, has an important function as a repair enzyme for proteins that have been inactivated by oxidation. Catalyzes the reversible oxidation-reduction of methionine sulfoxide in proteins to methionine. The chain is Peptide methionine sulfoxide reductase MsrA from Streptomyces coelicolor (strain ATCC BAA-471 / A3(2) / M145).